A 174-amino-acid chain; its full sequence is RNA pyrophosphohydrolase (174 aa).

The 144-residue stretch at 6–149 (GYRPNVGIIL…KRDVYLGALK (144 aa)) folds into the Nudix hydrolase domain. A Nudix box motif is present at residues 38-59 (GGIKPGESPETAMYRELYEEVG).

Belongs to the Nudix hydrolase family. RppH subfamily. A divalent metal cation is required as a cofactor.

Its function is as follows. Accelerates the degradation of transcripts by removing pyrophosphate from the 5'-end of triphosphorylated RNA, leading to a more labile monophosphorylated state that can stimulate subsequent ribonuclease cleavage. This chain is RNA pyrophosphohydrolase, found in Neisseria meningitidis serogroup B (strain ATCC BAA-335 / MC58).